The primary structure comprises 565 residues: Small ribosomal subunit protein bS1 (565 aa).

S1 motif domains follow at residues 30 to 96 (SSVI…LSRD), 114 to 180 (NEKV…VSRR), 201 to 269 (GQVI…LGMK), 286 to 356 (NARF…LGLK), 373 to 443 (GSTV…LGVK), and 454 to 529 (GDVK…VSIK).

The protein belongs to the bacterial ribosomal protein bS1 family. Post-translationally, the initiator methionine may be removed.

In terms of biological role, binds mRNA; thus facilitating recognition of the initiation point. It is needed to translate mRNA with a short Shine-Dalgarno (SD) purine-rich sequence. In Rhodopseudomonas palustris (strain ATCC BAA-98 / CGA009), this protein is Small ribosomal subunit protein bS1 (rpsA).